The primary structure comprises 370 residues: Histidinol-phosphate aminotransferase (370 aa).

Lys-229 is modified (N6-(pyridoxal phosphate)lysine).

This sequence belongs to the class-II pyridoxal-phosphate-dependent aminotransferase family. Histidinol-phosphate aminotransferase subfamily. Homodimer. Pyridoxal 5'-phosphate serves as cofactor.

It carries out the reaction L-histidinol phosphate + 2-oxoglutarate = 3-(imidazol-4-yl)-2-oxopropyl phosphate + L-glutamate. It participates in amino-acid biosynthesis; L-histidine biosynthesis; L-histidine from 5-phospho-alpha-D-ribose 1-diphosphate: step 7/9. This is Histidinol-phosphate aminotransferase from Helicobacter hepaticus (strain ATCC 51449 / 3B1).